We begin with the raw amino-acid sequence, 155 residues long: 2-C-methyl-D-erythritol 2,4-cyclodiphosphate synthase (155 aa).

Residues Asp8 and His10 each contribute to the a divalent metal cation site. Residues 8-10 (DVH) and 34-35 (HS) contribute to the 4-CDP-2-C-methyl-D-erythritol 2-phosphate site. An a divalent metal cation-binding site is contributed by His42. 4-CDP-2-C-methyl-D-erythritol 2-phosphate is bound by residues 56–58 (DIG), 61–65 (FPDSD), 100–106 (AQKPKML), 132–135 (TTEE), Phe139, and Lys142.

It belongs to the IspF family. In terms of assembly, homotrimer. A divalent metal cation serves as cofactor.

It carries out the reaction 4-CDP-2-C-methyl-D-erythritol 2-phosphate = 2-C-methyl-D-erythritol 2,4-cyclic diphosphate + CMP. It functions in the pathway isoprenoid biosynthesis; isopentenyl diphosphate biosynthesis via DXP pathway; isopentenyl diphosphate from 1-deoxy-D-xylulose 5-phosphate: step 4/6. Functionally, involved in the biosynthesis of isopentenyl diphosphate (IPP) and dimethylallyl diphosphate (DMAPP), two major building blocks of isoprenoid compounds. Catalyzes the conversion of 4-diphosphocytidyl-2-C-methyl-D-erythritol 2-phosphate (CDP-ME2P) to 2-C-methyl-D-erythritol 2,4-cyclodiphosphate (ME-CPP) with a corresponding release of cytidine 5-monophosphate (CMP). The chain is 2-C-methyl-D-erythritol 2,4-cyclodiphosphate synthase from Clostridium botulinum (strain Kyoto / Type A2).